Here is a 286-residue protein sequence, read N- to C-terminus: Pantothenate synthetase (286 aa).

ATP is bound at residue methionine 30 to histidine 37. Histidine 37 acts as the Proton donor in catalysis. Glutamine 61 is a binding site for (R)-pantoate. Glutamine 61 is a beta-alanine binding site. Glycine 149–aspartate 152 provides a ligand contact to ATP. Glutamine 155 contacts (R)-pantoate. Residues valine 178 and leucine 186 to arginine 189 contribute to the ATP site.

It belongs to the pantothenate synthetase family. As to quaternary structure, homodimer.

The protein resides in the cytoplasm. The enzyme catalyses (R)-pantoate + beta-alanine + ATP = (R)-pantothenate + AMP + diphosphate + H(+). The protein operates within cofactor biosynthesis; (R)-pantothenate biosynthesis; (R)-pantothenate from (R)-pantoate and beta-alanine: step 1/1. Functionally, catalyzes the condensation of pantoate with beta-alanine in an ATP-dependent reaction via a pantoyl-adenylate intermediate. The chain is Pantothenate synthetase from Nitrosococcus oceani (strain ATCC 19707 / BCRC 17464 / JCM 30415 / NCIMB 11848 / C-107).